The chain runs to 589 residues: Probable methyltransferase PMT23 (589 aa).

Topologically, residues 1–4 (MAIS) are cytoplasmic. The helical; Signal-anchor for type II membrane protein transmembrane segment at 5–25 (VQHVVVLLLSTLLIAITFFLF) threads the bilayer. Topologically, residues 26–589 (TSDNARFPFP…FWRPAKPELR (564 aa)) are lumenal. N-linked (GlcNAc...) asparagine glycosylation is found at N70, N375, and N442.

It belongs to the methyltransferase superfamily.

The protein resides in the golgi apparatus membrane. This is Probable methyltransferase PMT23 from Arabidopsis thaliana (Mouse-ear cress).